The sequence spans 834 residues: Taste receptor type 1 member 2 (834 aa).

The N-terminal stretch at 1–19 is a signal peptide; sequence MEPRVRTVCFLFFLLRVLA. The Extracellular portion of the chain corresponds to 20–561; it reads EPAKNSDFYL…SFLEWHEAAT (542 aa). Residues Asn84, Asn292, Asn312, Asn363, Asn423, Asn482, and Asn522 are each glycosylated (N-linked (GlcNAc...) asparagine). A helical membrane pass occupies residues 562–582; sequence IAVALLAALGFLSTLAILVIF. Topologically, residues 583 to 597 are cytoplasmic; that stretch reads WRHFETPMVRSAGGP. A helical membrane pass occupies residues 598 to 618; the sequence is MCFLMLTLLLVAYMVVPVYVG. The Extracellular portion of the chain corresponds to 619-630; it reads LPKVSTCLCRQA. A helical transmembrane segment spans residues 631 to 651; the sequence is LFPVCFTICISCIAVRSFQIV. The Cytoplasmic portion of the chain corresponds to 652-676; that stretch reads CVFKMASRFPRAYSYWVRYQGSYVS. A helical membrane pass occupies residues 677–697; sequence VAFITALKMVTVVISLLATGL. Topologically, residues 698 to 722 are extracellular; that stretch reads NPTTRTDTDDPKIMIISCNPNYRNS. The helical transmembrane segment at 723–743 threads the bilayer; that stretch reads LLFNTSLDLLLSVAGFSFAYM. The Cytoplasmic segment spans residues 744 to 755; the sequence is GKELPTNYNEAK. A helical transmembrane segment spans residues 756–776; the sequence is FITFSMTFYFTSSVSLCTFMS. Residues 777–779 are Extracellular-facing; sequence VYD. Residues 780 to 800 traverse the membrane as a helical segment; the sequence is GVLVTIVDLLVTVFNLLAISL. The Cytoplasmic segment spans residues 801-834; it reads GYFGPKCYMILFYPERNTPAYFNSMIQGYTMRRD.

It belongs to the G-protein coupled receptor 3 family. TAS1R subfamily. As to quaternary structure, forms heterodimers with TAS1R3.

It localises to the cell membrane. Its function is as follows. Putative taste receptor. TAS1R2/TAS1R3 recognizes diverse natural and synthetic sweeteners. This is Taste receptor type 1 member 2 (TAS1R2) from Saimiri sciureus (Common squirrel monkey).